A 246-amino-acid chain; its full sequence is tRNA (guanine-N(7)-)-methyltransferase (246 aa).

Positions 1-23 (MIESSSPTPPALHEGAPADVSHP) are disordered. The S-adenosyl-L-methionine site is built by E75, E100, D127, and D150. The active site involves D150. A substrate-binding site is contributed by K154. The interval 156–161 (KHNKRR) is interaction with RNA. Substrate is bound by residues D186 and 225–228 (TKFE).

This sequence belongs to the class I-like SAM-binding methyltransferase superfamily. TrmB family.

The catalysed reaction is guanosine(46) in tRNA + S-adenosyl-L-methionine = N(7)-methylguanosine(46) in tRNA + S-adenosyl-L-homocysteine. Its pathway is tRNA modification; N(7)-methylguanine-tRNA biosynthesis. In terms of biological role, catalyzes the formation of N(7)-methylguanine at position 46 (m7G46) in tRNA. The protein is tRNA (guanine-N(7)-)-methyltransferase of Polaromonas naphthalenivorans (strain CJ2).